The chain runs to 440 residues: L-gulonolactone oxidase (440 aa).

The region spanning 17–187 (YGCCPEMYFQ…LTVTLQCVPQ (171 aa)) is the FAD-binding PCMH-type domain. The residue at position 54 (H54) is a Pros-8alpha-FAD histidine. A helical transmembrane segment spans residues 253–273 (FYLLEFLLWISTFLPGLVGWI).

This sequence belongs to the oxygen-dependent FAD-linked oxidoreductase family. FAD is required as a cofactor.

It localises to the microsome membrane. The protein resides in the endoplasmic reticulum membrane. The catalysed reaction is L-gulono-1,4-lactone + O2 = L-ascorbate + H2O2 + H(+). It functions in the pathway cofactor biosynthesis; L-ascorbate biosynthesis via UDP-alpha-D-glucuronate pathway; L-ascorbate from UDP-alpha-D-glucuronate: step 4/4. Oxidizes L-gulono-1,4-lactone to hydrogen peroxide and L-xylo-hexulonolactone which spontaneously isomerizes to L-ascorbate. This is L-gulonolactone oxidase (GULO) from Bos taurus (Bovine).